Reading from the N-terminus, the 148-residue chain is Large ribosomal subunit protein uL11 (148 aa).

A disordered region spans residues 89–108 (EKKKGSGAHKPGKEKVGQVT).

It belongs to the universal ribosomal protein uL11 family. As to quaternary structure, part of the ribosomal stalk of the 50S ribosomal subunit. Interacts with L10 and the large rRNA to form the base of the stalk. L10 forms an elongated spine to which L12 dimers bind in a sequential fashion forming a multimeric L10(L12)X complex. Post-translationally, one or more lysine residues are methylated.

Functionally, forms part of the ribosomal stalk which helps the ribosome interact with GTP-bound translation factors. This is Large ribosomal subunit protein uL11 from Anaeromyxobacter dehalogenans (strain 2CP-1 / ATCC BAA-258).